The chain runs to 370 residues: Aminomethyltransferase (370 aa).

The protein belongs to the GcvT family. As to quaternary structure, the glycine cleavage system is composed of four proteins: P, T, L and H.

The catalysed reaction is N(6)-[(R)-S(8)-aminomethyldihydrolipoyl]-L-lysyl-[protein] + (6S)-5,6,7,8-tetrahydrofolate = N(6)-[(R)-dihydrolipoyl]-L-lysyl-[protein] + (6R)-5,10-methylene-5,6,7,8-tetrahydrofolate + NH4(+). In terms of biological role, the glycine cleavage system catalyzes the degradation of glycine. This Corynebacterium aurimucosum (strain ATCC 700975 / DSM 44827 / CIP 107346 / CN-1) (Corynebacterium nigricans) protein is Aminomethyltransferase.